Here is a 406-residue protein sequence, read N- to C-terminus: Succinyl-diaminopimelate desuccinylase (406 aa).

A Zn(2+)-binding site is contributed by His-95. The active site involves Asp-97. Asp-128 lines the Zn(2+) pocket. Glu-162 acts as the Proton acceptor in catalysis. 3 residues coordinate Zn(2+): Glu-163, Glu-191, and His-377.

This sequence belongs to the peptidase M20A family. DapE subfamily. In terms of assembly, homodimer. Zn(2+) is required as a cofactor. The cofactor is Co(2+).

It carries out the reaction N-succinyl-(2S,6S)-2,6-diaminopimelate + H2O = (2S,6S)-2,6-diaminopimelate + succinate. Its pathway is amino-acid biosynthesis; L-lysine biosynthesis via DAP pathway; LL-2,6-diaminopimelate from (S)-tetrahydrodipicolinate (succinylase route): step 3/3. Its function is as follows. Catalyzes the hydrolysis of N-succinyl-L,L-diaminopimelic acid (SDAP), forming succinate and LL-2,6-diaminopimelate (DAP), an intermediate involved in the bacterial biosynthesis of lysine and meso-diaminopimelic acid, an essential component of bacterial cell walls. The polypeptide is Succinyl-diaminopimelate desuccinylase (Polaromonas naphthalenivorans (strain CJ2)).